We begin with the raw amino-acid sequence, 167 residues long: Cell division protein SepF (167 aa).

The tract at residues 25–64 (EEDVAPVNNSTFQEKKHKKRSAVQRKQKNSDQEGDSVVPL) is disordered. A compositionally biased stretch (basic residues) spans 39 to 51 (KKHKKRSAVQRKQ).

This sequence belongs to the SepF family. As to quaternary structure, homodimer. Interacts with FtsZ.

The protein localises to the cytoplasm. Cell division protein that is part of the divisome complex and is recruited early to the Z-ring. Probably stimulates Z-ring formation, perhaps through the cross-linking of FtsZ protofilaments. Its function overlaps with FtsA. The polypeptide is Cell division protein SepF (Natranaerobius thermophilus (strain ATCC BAA-1301 / DSM 18059 / JW/NM-WN-LF)).